The primary structure comprises 271 residues: ATP synthase subunit a (271 aa).

Transmembrane regions (helical) follow at residues 40 to 60, 100 to 120, 146 to 166, 220 to 240, and 242 to 262; these read TINI…LVLF, LIAP…LMDL, DVNV…FYNI, LIFI…LNVP, and AIFH…LTIV.

The protein belongs to the ATPase A chain family. In terms of assembly, F-type ATPases have 2 components, CF(1) - the catalytic core - and CF(0) - the membrane proton channel. CF(1) has five subunits: alpha(3), beta(3), gamma(1), delta(1), epsilon(1). CF(0) has three main subunits: a(1), b(2) and c(9-12). The alpha and beta chains form an alternating ring which encloses part of the gamma chain. CF(1) is attached to CF(0) by a central stalk formed by the gamma and epsilon chains, while a peripheral stalk is formed by the delta and b chains.

It localises to the cell inner membrane. In terms of biological role, key component of the proton channel; it plays a direct role in the translocation of protons across the membrane. The protein is ATP synthase subunit a of Shigella flexneri.